Consider the following 613-residue polypeptide: Cleavage and polyadenylation specificity factor subunit 3-II (613 aa).

The HXHXDH motif motif lies at 67-72 (HFHMDH).

It belongs to the metallo-beta-lactamase superfamily. RNA-metabolizing metallo-beta-lactamase-like family. INTS11 subfamily. Component of the CPSF complex, at least composed of CPSF160, CPSF100, CPSF73-I, CPSF73-II, CPSF30, FY and FIPS5. Interacts with CPSF30, CPSF100, CPSF160 and FY. As to expression, highly expressed in senescence leaves, petals, stamens, pollen and late stages of siliques with seeds. Also detected in roots, stems, leaves and seedlings.

It is found in the nucleus. In terms of biological role, component of the cleavage and polyadenylation specificity factor (CPSF) complex that play a key role in pre-mRNA 3'-end formation, recognizing the AAUAAA signal sequence and interacting with poly(A) polymerase and other factors to bring about cleavage and poly(A) addition. May function as mRNA 3'-end-processing endonuclease and also be involved in the histone 3'-end pre-mRNA processing. This chain is Cleavage and polyadenylation specificity factor subunit 3-II (CPSF73-II), found in Arabidopsis thaliana (Mouse-ear cress).